The following is a 316-amino-acid chain: Polyprenyl transferase ausN (316 aa).

Helical transmembrane passes span 45–65 (VVGV…TFLL), 69–89 (VILS…NDLI), 108–128 (GAVS…CGGS), 129–149 (LLLL…FFAL), 163–183 (LILT…DMNP), 188–208 (IPTL…DIVY), 233–253 (DQIA…GGIL), 256–276 (LGIP…LRFL), and 296–316 (SCLL…CVRL).

The protein belongs to the UbiA prenyltransferase family. Mg(2+) serves as cofactor.

It localises to the membrane. The enzyme catalyses 3,5-dimethylorsellinate + (2E,6E)-farnesyl diphosphate = (3R)-3-farnesyl-6-hydroxy-2,3,5-trimethyl-4-oxocyclohexa-1,5-diene-1-carboxylate + diphosphate + H(+). Its pathway is secondary metabolite biosynthesis; terpenoid biosynthesis. Its function is as follows. Polyprenyl transferase; part of the gene cluster A that mediates the biosynthesis of the fungal meroterpenoid acetoxydehydroaustin. The first step of the pathway is the synthesis of 3,5-dimethylorsellinic acid by the polyketide synthase ausA. 3,5-dimethylorsellinic acid is then prenylated by the polyprenyl transferase ausN. Further epoxidation by the FAD-dependent monooxygenase ausM and cyclization by the probable terpene cyclase ausL lead to the formation of protoaustinoid A. Protoaustinoid A is then oxidized to spiro-lactone preaustinoid A3 by the combined action of the FAD-binding monooxygenases ausB and ausC, and the dioxygenase ausE. Acid-catalyzed keto-rearrangement and ring contraction of the tetraketide portion of preaustinoid A3 by ausJ lead to the formation of preaustinoid A4. The aldo-keto reductase ausK, with the help of ausH, is involved in the next step by transforming preaustinoid A4 into isoaustinone which is in turn hydroxylated by the P450 monooxygenase ausI to form austinolide. The cytochrome P450 monooxygenase ausG then modifies austinolide to austinol. Austinol is further acetylated to austin by the O-acetyltransferase ausP, which spontaneously changes to dehydroaustin. The cytochrome P450 monooxygenase then converts dehydroaustin is into 7-dehydrodehydroaustin. The hydroxylation catalyzed by ausR permits the second O-acetyltransferase ausQ to add an additional acetyl group to the molecule, leading to the formation of acetoxydehydroaustin. Due to genetic rearrangements of the clusters and the subsequent loss of some enzymes, the end product of the Penicillium brasilianum austinoid biosynthesis clusters is acetoxydehydroaustin. The polypeptide is Polyprenyl transferase ausN (Penicillium brasilianum).